The chain runs to 300 residues: Nucleotide-binding protein Daci_5422 (300 aa).

10 to 17 (GMSGSGKS) provides a ligand contact to ATP. Residue 59–62 (DARS) coordinates GTP.

It belongs to the RapZ-like family.

Displays ATPase and GTPase activities. This is Nucleotide-binding protein Daci_5422 from Delftia acidovorans (strain DSM 14801 / SPH-1).